The primary structure comprises 791 residues: Cullin-2 (791 aa).

Positions 722 to 784 (DRKYYMECAI…KMYIQRTDQN (63 aa)) constitute a Cullin neddylation domain. Residue Lys736 forms a Glycyl lysine isopeptide (Lys-Gly) (interchain with G-Cter in NEDD8) linkage.

It belongs to the cullin family. As to quaternary structure, component of multiple CBC (Cul2-ElonginB-ElonginC) E3 ubiquitin-protein ligase complexes formed of cul-2, elb-1, elc-1, rbx-1 and a variable substrate recognition component. Component of the CBC(fem-1) E3 ubiquitin-protein ligase complex with fem-1, fem-2 and fem-3. The CBC(fem-1) complex interacts with tra-1 and promotes tra-1 degradation. Probable component of the CBC(lrr-1) E3 ubiquitin-protein ligase complex incuding cul-2, elb-1, elc-1, rbx-1 and lrr-1. The CBC(lrr-1) complex interacts with the DNA replisome complex at the end of S phase; the interaction promotes the release of components of the CMG helicase complex (a component of the replisome) from chromatin. Probable component of an CBC(zif-1) E3 ubiquitin-protein ligase including cul-2, elc-1, rbx-1 and zif-1. Part of an E3 ubiquitin-protein ligase complex including cul-2, elc-1 and zyg-11. Interacts with Skp1-related protein skr-10. Post-translationally, neddylated; which enhances the ubiquitination activity of CBC (Cul2-ElonginB-ElonginC) E3 ubiquitin-protein ligase complexes. In adults, highly expressed in meiotic cells and oocytes. In larvae, expressed in many proliferating cell types: P cells during the L1 stage; seam cells when they divide at every molt; vulval and somatic gonad cells in late L3 and L4 stages; and intestinal cells throughout larval development.

It is found in the cytoplasm. Its subcellular location is the nucleus. The protein operates within protein modification; protein ubiquitination. In terms of biological role, core component of multiple cullin-RING-based CBC (Cul2-ElonginB-ElonginC) E3 ubiquitin-protein ligase complexes which mediate the ubiquitination and subsequent proteasomal degradation of target proteins. As a scaffold protein may contribute to catalysis through positioning of the substrate and the ubiquitin-conjugating enzyme. The functional specificity of the CBC complex depends on the variable substrate recognition component. May function in ubiquitin-mediated degradation of CKIs to target cki-1 for degradation. CBC(zif-1) may ensure germline precursor cell asymmetry by targeting germline proteins for destruction if expressed in non-germline cells. As part of the CBC(fem-1) complex directs ubiquitination of tra-1. As part of the CBC(lrr-1) complex, required for the ubiquitination and dissasembly of the CMG helicase complex from chromatin at the end of DNA replication. Positive cell-cycle regulator that is required at two distinct points in the cell cycle; the G1-to-S-phase transition and mitosis. Also required for proper cytoskeletal movement and mitotic chromosome condensation. In Caenorhabditis elegans, this protein is Cullin-2.